The following is a 544-amino-acid chain: Chaperonin GroEL 1 (544 aa).

ATP contacts are provided by residues 29-32, 86-90, Gly-413, 479-481, and Asp-495; these read TLGP, DGTTT, and NAA. The interval 525 to 544 is disordered; the sequence is PEPKDNAPAGAGAGGGDFDY. Gly residues predominate over residues 535 to 544; the sequence is AGAGGGDFDY.

Belongs to the chaperonin (HSP60) family. In terms of assembly, forms a cylinder of 14 subunits composed of two heptameric rings stacked back-to-back. Interacts with the co-chaperonin GroES.

The protein localises to the cytoplasm. The enzyme catalyses ATP + H2O + a folded polypeptide = ADP + phosphate + an unfolded polypeptide.. Functionally, together with its co-chaperonin GroES, plays an essential role in assisting protein folding. The GroEL-GroES system forms a nano-cage that allows encapsulation of the non-native substrate proteins and provides a physical environment optimized to promote and accelerate protein folding. This Nostoc sp. (strain PCC 7120 / SAG 25.82 / UTEX 2576) protein is Chaperonin GroEL 1.